A 244-amino-acid polypeptide reads, in one-letter code: Tyrosine recombinase XerD-like (244 aa).

The region spanning 1–73 (MRDRISAFLE…ACNQFLYFLY (73 aa)) is the Core-binding (CB) domain. The 155-residue stretch at 90 to 244 (AEKKTEKPEI…KTVLTLEKYR (155 aa)) folds into the Tyr recombinase domain. Active-site residues include K150 and R211. Catalysis depends on Y243, which acts as the O-(3'-phospho-DNA)-tyrosine intermediate.

It belongs to the 'phage' integrase family. XerD-like subfamily.

It is found in the cytoplasm. In terms of biological role, putative tyrosine recombinase. Not involved in the cutting and rejoining of the recombining DNA molecules on dif(SL) site. This is Tyrosine recombinase XerD-like from Streptococcus pneumoniae (strain CGSP14).